Here is a 780-residue protein sequence, read N- to C-terminus: B3 domain-containing transcription repressor VAL2 (780 aa).

Positions 286-387 (FEKVLSASDA…KLVMGYRKAT (102 aa)) form a DNA-binding region, TF-B3. The segment at 515–565 (TGEQEQWVQCDACGKWRQLPVDILLPPKWSCSDNLLDPGRSSCSAPDELSP) adopts a CW-type zinc-finger fold. Positions 524, 527, 545, and 557 each coordinate Zn(2+). 3 disordered regions span residues 577–608 (EFKR…AGIT), 669–695 (KRNK…TEVE), and 743–780 (NTAG…DPVN). The span at 584 to 603 (ASSNEKLNQSQDASALNSLG) shows a compositional bias: polar residues. Residues 674 to 686 (EAGQASQQAQSQS) show a composition bias toward low complexity. Positions 743–765 (NTAGEQQSSDMVSTEHGSSSAAQ) are enriched in polar residues.

It is found in the nucleus. Transcriptional repressor of gene expression involved in embryonic pathways, such as LEC1, ABI3, and FUS3. Repressor of the sugar-inducible genes involved in the seed maturation program in seedlings. Plays an essential role in regulating the transition from seed maturation to seedling growth. Functionally redundant with VAL1/HSI2. In Arabidopsis thaliana (Mouse-ear cress), this protein is B3 domain-containing transcription repressor VAL2 (VAL2).